We begin with the raw amino-acid sequence, 444 residues long: ATP-dependent RNA helicase sub2 (444 aa).

A Q motif motif is present at residues 59–87; it reads TGFREFLLKPELLRAISWCGFEHPSEVQQ. The Helicase ATP-binding domain maps to 90–265; that stretch reads IPQAILGTDV…KKFMQNPLEI (176 aa). 103–110 is an ATP binding site; the sequence is AKSGLGKT. A DECD box motif is present at residues 212–215; it reads DECD. The Helicase C-terminal domain occupies 277-438; sequence GLQQYYIKLE…EYPEGGVDSA (162 aa).

Belongs to the DEAD box helicase family. DECD subfamily.

It is found in the nucleus. It carries out the reaction ATP + H2O = ADP + phosphate + H(+). ATP-binding RNA helicase involved in transcription elongation and required for the export of mRNA out of the nucleus. SUB2 also plays a role in pre-mRNA splicing and spliceosome assembly. May be involved in rDNA and telomeric silencing, and maintenance of genome integrity. The sequence is that of ATP-dependent RNA helicase sub2 (sub2) from Sclerotinia sclerotiorum (strain ATCC 18683 / 1980 / Ss-1) (White mold).